A 428-amino-acid chain; its full sequence is Exodeoxyribonuclease 7 large subunit (428 aa).

The protein belongs to the XseA family. As to quaternary structure, heterooligomer composed of large and small subunits.

The protein localises to the cytoplasm. It catalyses the reaction Exonucleolytic cleavage in either 5'- to 3'- or 3'- to 5'-direction to yield nucleoside 5'-phosphates.. Its function is as follows. Bidirectionally degrades single-stranded DNA into large acid-insoluble oligonucleotides, which are then degraded further into small acid-soluble oligonucleotides. The polypeptide is Exodeoxyribonuclease 7 large subunit (Mycobacterium leprae (strain TN)).